A 293-amino-acid polypeptide reads, in one-letter code: ATP phosphoribosyltransferase (293 aa).

This sequence belongs to the ATP phosphoribosyltransferase family. Long subfamily. The cofactor is Mg(2+).

The protein resides in the cytoplasm. It catalyses the reaction 1-(5-phospho-beta-D-ribosyl)-ATP + diphosphate = 5-phospho-alpha-D-ribose 1-diphosphate + ATP. It participates in amino-acid biosynthesis; L-histidine biosynthesis; L-histidine from 5-phospho-alpha-D-ribose 1-diphosphate: step 1/9. Feedback inhibited by histidine. In terms of biological role, catalyzes the condensation of ATP and 5-phosphoribose 1-diphosphate to form N'-(5'-phosphoribosyl)-ATP (PR-ATP). Has a crucial role in the pathway because the rate of histidine biosynthesis seems to be controlled primarily by regulation of HisG enzymatic activity. This Nitratidesulfovibrio vulgaris (strain DSM 19637 / Miyazaki F) (Desulfovibrio vulgaris) protein is ATP phosphoribosyltransferase.